We begin with the raw amino-acid sequence, 504 residues long: GTPase Obg (504 aa).

The region spanning 2-159 (SQFVDRVVLH…KDVTLELKSM (158 aa)) is the Obg domain. Residues 68–88 (AERGNNGAGDDRHGARGKDLT) form a disordered region. Residues 160–340 (ADVGLVGFPS…LRFALMDIVR (181 aa)) form the OBG-type G domain. GTP-binding positions include 166–173 (GFPSAGKS), 191–195 (FTTLA), 212–215 (DVPG), 292–295 (NKMD), and 321–323 (STV). Mg(2+)-binding residues include S173 and T193. Residues 364–444 (KRKGRFADFE…IGGITFEWDP (81 aa)) enclose the OCT domain. Residues 449–481 (GVDQTPAYGRGKDRRLEQTDRVTAEQRKRASQA) form a disordered region. Residues 458–476 (RGKDRRLEQTDRVTAEQRK) are compositionally biased toward basic and acidic residues.

It belongs to the TRAFAC class OBG-HflX-like GTPase superfamily. OBG GTPase family. In terms of assembly, monomer. It depends on Mg(2+) as a cofactor.

Its subcellular location is the cytoplasm. Functionally, an essential GTPase which binds GTP, GDP and possibly (p)ppGpp with moderate affinity, with high nucleotide exchange rates and a fairly low GTP hydrolysis rate. Plays a role in control of the cell cycle, stress response, ribosome biogenesis and in those bacteria that undergo differentiation, in morphogenesis control. The chain is GTPase Obg from Corynebacterium urealyticum (strain ATCC 43042 / DSM 7109).